The following is a 418-amino-acid chain: MIISKNRKLVVGLEIGTTKVVTLVGEVLTNGKIKIIGIGICQSNGIDKGRINNLDAVISCIRESIHQAEIMANCQITSVYLSLSSKYINCQNEIGIVPISEDEVTKEDIENVIHTAKSVKILNEHHILHVIPQEYSIDQQSGIKNPIGLSGTRMQVRVHLITCHQNMAKNIIKAVEKCDIKVDQVIFSGLASSKAVLTEDECKLGVCMIDIGGGTIDLITYIDGSIQDSQVIPYAGNIVTKDISYAFSTSYSDSEKIKIKYGSAIKLSPGTSKNIDLSSKYGNFQKNLQQDTVIEVIESRYNELLHLINNRILYVQKKLYKEGRKYQLTGGIVLTGGASTISFLTECAEKIFQKKIRIAKPLNISGLTDNVTEPHYSTVVGLLHYGKEFYFDDTNQKREISFIEKWFQKISNWFKKEF.

Belongs to the FtsA/MreB family. As to quaternary structure, self-interacts. Interacts with FtsZ.

The protein resides in the cell inner membrane. Cell division protein that is involved in the assembly of the Z ring. May serve as a membrane anchor for the Z ring. In Buchnera aphidicola subsp. Schizaphis graminum (strain Sg), this protein is Cell division protein FtsA.